The chain runs to 295 residues: MRPEIAVLDIQGQYRVYTEFYRADAAENTIILINGSLATTASFAQTVRNLHPQFNVVLFDQPYSGKSKPHNRQERLISKETEAHILLELIEHFQADHVMSFSWGGASTLLALAHQPRYVKKAVVSSFSPVINEPMRDYLDRGCQYLAACDRYQVGNLVNDTIGKHLPSLFKRFNYRHVSSLDSHEYAQMHFHINQVLEHDLERALQGARNINIPVLFINGERDEYTTVEDARQFSKHVGRSQFSVIRDAGHFLDMENKTACENTRNVMLGFLKPTVREPRQRYQPVQQGQHAFAI.

The 227-residue stretch at 28-254 (NTIILINGSL…VIRDAGHFLD (227 aa)) folds into the AB hydrolase-1 domain.

The protein operates within polyester biosynthesis; polyhydroxyalkanoate biosynthesis. In terms of biological role, catalyzes the transfer of the acyl moiety from in vitro synthesized 3-hydroxydecanoyl-CoA to acyl carrier protein. The protein is (R)-3-hydroxydecanoyl-ACP:CoA transacylase (phaG) of Pseudomonas putida (strain ATCC 47054 / DSM 6125 / CFBP 8728 / NCIMB 11950 / KT2440).